A 392-amino-acid chain; its full sequence is Heat-inducible transcription repressor HrcA (392 aa).

The protein belongs to the HrcA family.

Functionally, negative regulator of class I heat shock genes (grpE-dnaK-dnaJ and groELS operons). Prevents heat-shock induction of these operons. This is Heat-inducible transcription repressor HrcA from Chlamydia trachomatis serovar L2 (strain ATCC VR-902B / DSM 19102 / 434/Bu).